A 162-amino-acid polypeptide reads, in one-letter code: Phosphopantetheine adenylyltransferase (162 aa).

Ser-11 is a binding site for substrate. Residues 11–12 and His-19 contribute to the ATP site; that span reads SF. Residues Lys-43, Val-76, and Arg-90 each contribute to the substrate site. Residues 91–93, Glu-101, and 126–132 contribute to the ATP site; these read GLR and HLYISSS.

Belongs to the bacterial CoaD family. As to quaternary structure, homohexamer. Mg(2+) is required as a cofactor.

It is found in the cytoplasm. The catalysed reaction is (R)-4'-phosphopantetheine + ATP + H(+) = 3'-dephospho-CoA + diphosphate. The protein operates within cofactor biosynthesis; coenzyme A biosynthesis; CoA from (R)-pantothenate: step 4/5. Its function is as follows. Reversibly transfers an adenylyl group from ATP to 4'-phosphopantetheine, yielding dephospho-CoA (dPCoA) and pyrophosphate. The polypeptide is Phosphopantetheine adenylyltransferase (Streptococcus pneumoniae (strain JJA)).